A 475-amino-acid chain; its full sequence is Protein FAM161A (475 aa).

The segment at 53–107 (ISDSSSSSASEKSCSHPALSVTSLSEPDLDGSSSLSTTTDEGLPDLEEKTPGESS) is disordered. 2 stretches are compositionally biased toward low complexity: residues 54 to 64 (SDSSSSSASEK) and 82 to 93 (DGSSSLSTTTDE). Residues 162–234 (VREQNRREKA…RERNRAALLA (73 aa)) adopt a coiled-coil conformation. The tract at residues 255–434 (KLRDLFRAKR…PTASSRGREQ (180 aa)) is required for interaction with CFAP418. Positions 314–337 (RSACRRFRDPRSPAKPRGKHRRRC) are disordered. Residues 327–337 (AKPRGKHRRRC) show a composition bias toward basic residues. Lys377 is covalently cross-linked (Glycyl lysine isopeptide (Lys-Gly) (interchain with G-Cter in SUMO2)). The interval 389–441 (EEILRETRRPGRSPRRKSPGRSSNPKPRPHECSPPMPTASSRGREQAIRRSEK) is disordered. The segment covering 398-407 (PGRSPRRKSP) has biased composition (basic residues). Residues 430-441 (RGREQAIRRSEK) are compositionally biased toward basic and acidic residues.

This sequence belongs to the FAM161 family. In terms of assembly, interacts (via central region) with CFAP418 (via N-terminus); the interaction is direct. Interacts (via C-terminus) with microtubules. Interacts with LCA5. Interacts with CEP290. Interacts with SDCCAG8. Interacts with FAM161B. Interacts with POC1B. Interacts with CEP78. Forms a microtubule-associated complex with POC5, CETN2 and POC1B. Interacts with CCDC15. Expressed in the retina.

Its subcellular location is the cytoplasm. It is found in the cytoskeleton. The protein localises to the cilium basal body. It localises to the cell projection. The protein resides in the cilium. Its subcellular location is the microtubule organizing center. It is found in the centrosome. The protein localises to the centriole. Involved in ciliogenesis. This Mus musculus (Mouse) protein is Protein FAM161A.